The sequence spans 228 residues: Ribosomal RNA small subunit methyltransferase G (228 aa).

S-adenosyl-L-methionine is bound by residues Gly89, Leu94, 140–141, and Arg159; that span reads VE.

The protein belongs to the methyltransferase superfamily. RNA methyltransferase RsmG family.

It is found in the cytoplasm. It carries out the reaction guanosine(527) in 16S rRNA + S-adenosyl-L-methionine = N(7)-methylguanosine(527) in 16S rRNA + S-adenosyl-L-homocysteine. In terms of biological role, specifically methylates the N7 position of guanine in position 527 of 16S rRNA. The polypeptide is Ribosomal RNA small subunit methyltransferase G (Burkholderia vietnamiensis (strain G4 / LMG 22486) (Burkholderia cepacia (strain R1808))).